The sequence spans 351 residues: Methylthioribose-1-phosphate isomerase (351 aa).

Substrate is bound by residues 51-53 (RGA), R94, and Q199. The active-site Proton donor is D240. 250-251 (NK) lines the substrate pocket.

This sequence belongs to the EIF-2B alpha/beta/delta subunits family. MtnA subfamily. In terms of assembly, homodimer.

It catalyses the reaction 5-(methylsulfanyl)-alpha-D-ribose 1-phosphate = 5-(methylsulfanyl)-D-ribulose 1-phosphate. Its pathway is amino-acid biosynthesis; L-methionine biosynthesis via salvage pathway; L-methionine from S-methyl-5-thio-alpha-D-ribose 1-phosphate: step 1/6. Its function is as follows. Catalyzes the interconversion of methylthioribose-1-phosphate (MTR-1-P) into methylthioribulose-1-phosphate (MTRu-1-P). This is Methylthioribose-1-phosphate isomerase from Bacillus thuringiensis subsp. konkukian (strain 97-27).